The following is a 251-amino-acid chain: HTH-type transcriptional regulator UlaR (251 aa).

The region spanning 3 to 58 (EAQRHQILLDMLAQLGFVTVENVIERLGISPATARRDINKLDESGKLKKVRNGAEA) is the HTH deoR-type domain. Residues 20-39 (VTVENVIERLGISPATARRD) constitute a DNA-binding region (H-T-H motif).

It localises to the cytoplasm. Its function is as follows. Represses ulaG and the ulaABCDEF operon. This chain is HTH-type transcriptional regulator UlaR, found in Salmonella arizonae (strain ATCC BAA-731 / CDC346-86 / RSK2980).